A 250-amino-acid polypeptide reads, in one-letter code: Ribonuclease PH (250 aa).

Phosphate-binding positions include arginine 99 and 137-139 (GTR).

This sequence belongs to the RNase PH family. In terms of assembly, homohexameric ring arranged as a trimer of dimers.

The catalysed reaction is tRNA(n+1) + phosphate = tRNA(n) + a ribonucleoside 5'-diphosphate. In terms of biological role, phosphorolytic 3'-5' exoribonuclease that plays an important role in tRNA 3'-end maturation. Removes nucleotide residues following the 3'-CCA terminus of tRNAs; can also add nucleotides to the ends of RNA molecules by using nucleoside diphosphates as substrates, but this may not be physiologically important. Probably plays a role in initiation of 16S rRNA degradation (leading to ribosome degradation) during starvation. This chain is Ribonuclease PH, found in Bordetella parapertussis (strain 12822 / ATCC BAA-587 / NCTC 13253).